Reading from the N-terminus, the 249-residue chain is Solute carrier family 25 member 35 (249 aa).

Solcar repeat units follow at residues 1 to 90 (MDFL…AEAG) and 152 to 243 (QSWK…LRMV). The next 4 helical transmembrane spans lie at 38-58 (TYQRHYRNVFHAFITIGKVDG), 59-79 (LAALQRGLAPALLYQFLMNGI), 154-174 (WKVALAAAMVSGIAVVLAMTP), and 226-249 (LGPHTILSLFFWDQLRMVYYTYTK).

It belongs to the mitochondrial carrier (TC 2.A.29) family.

It is found in the mitochondrion inner membrane. The catalysed reaction is a dicarboxylate(in) + sulfate(out) = a dicarboxylate(out) + sulfate(in). In terms of biological role, putative antiporter that exchanges dicarboxylates and sulfur oxoanions across the inner membrane of mitochondria. The polypeptide is Solute carrier family 25 member 35 (SLC25A35) (Bos taurus (Bovine)).